A 604-amino-acid polypeptide reads, in one-letter code: Arginine--tRNA ligase (604 aa).

A 'HIGH' region motif is present at residues P142–H152.

The protein belongs to the class-I aminoacyl-tRNA synthetase family. As to quaternary structure, monomer.

It is found in the cytoplasm. The catalysed reaction is tRNA(Arg) + L-arginine + ATP = L-arginyl-tRNA(Arg) + AMP + diphosphate. This Prochlorococcus marinus (strain MIT 9312) protein is Arginine--tRNA ligase.